The primary structure comprises 265 residues: Glutamate racemase (265 aa).

Substrate-binding positions include 12 to 13 and 44 to 45; these read DS and YG. C75 (proton donor/acceptor) is an active-site residue. 76–77 contacts substrate; it reads NT. The Proton donor/acceptor role is filled by C186. 187 to 188 serves as a coordination point for substrate; sequence TH.

It belongs to the aspartate/glutamate racemases family.

The enzyme catalyses L-glutamate = D-glutamate. Its pathway is cell wall biogenesis; peptidoglycan biosynthesis. Functionally, provides the (R)-glutamate required for cell wall biosynthesis. The sequence is that of Glutamate racemase from Pseudomonas putida (strain GB-1).